Here is a 518-residue protein sequence, read N- to C-terminus: MGDETSPLNLGTVVSVRGSVVDIRFDDDLPSIHTILRANEGEIVLEVLAQHDARHVRAIALTPTQGLARGMAVQDTGGPLKAPVGKGSLSRMFDVFGNTIDRETALSDVQWRSVHRAPPPLARRSTKSEIFETGIKVIDVLMPLERGGKAGLFGGAGVGKTVLLTEMIHNMVGQHEGVSIFCGIGERCREGEELYRDMKQAGVLPNMVMIFAQMNEPPGARFRVGHAALTMAEYFRDDEHRDMLLLIDNIFRFIQAGMEVSGLMGQMPSRLGYQPTMGTELSGLEERIANTDTGAITSIQAVYVPADDFTDPAAVHTFSHLSASIVLSRKRASEGLYPAIDPLQSSSKMATPSIVGARHYGLAQEIRRTLAQYAELKDIIAMLGLEQLSPEDRNVVARARRLERFLTQPFFTTEQFTGHKGKLVSLKDALDGCERILRDEFKDHPESALYMIGTIDEAKGKAKPPAPATPSEPDSKTEARADPKPAAESPAKAIPGPHPQSGAKPQPETDHAADTHES.

An ATP-binding site is contributed by 154 to 161 (GGAGVGKT). A disordered region spans residues 455 to 518 (IDEAKGKAKP…TDHAADTHES (64 aa)). 2 stretches are compositionally biased toward basic and acidic residues: residues 473–485 (PDSKTEARADPKP) and 507–518 (PETDHAADTHES).

The protein belongs to the ATPase alpha/beta chains family. In terms of assembly, F-type ATPases have 2 components, CF(1) - the catalytic core - and CF(0) - the membrane proton channel. CF(1) has five subunits: alpha(3), beta(3), gamma(1), delta(1), epsilon(1). CF(0) has three main subunits: a(1), b(2) and c(9-12). The alpha and beta chains form an alternating ring which encloses part of the gamma chain. CF(1) is attached to CF(0) by a central stalk formed by the gamma and epsilon chains, while a peripheral stalk is formed by the delta and b chains.

The protein localises to the cell inner membrane. It carries out the reaction ATP + H2O + 4 H(+)(in) = ADP + phosphate + 5 H(+)(out). Produces ATP from ADP in the presence of a proton gradient across the membrane. The catalytic sites are hosted primarily by the beta subunits. This chain is ATP synthase subunit beta 2, found in Albidiferax ferrireducens (strain ATCC BAA-621 / DSM 15236 / T118) (Rhodoferax ferrireducens).